We begin with the raw amino-acid sequence, 212 residues long: Ribonuclease HII (212 aa).

The RNase H type-2 domain maps to 20-209 (TCVVGVDEVG…VHNILYQEAS (190 aa)). Residues Asp-26, Glu-27, and Asp-117 each coordinate a divalent metal cation.

It belongs to the RNase HII family. Mn(2+) is required as a cofactor. Requires Mg(2+) as cofactor.

It localises to the cytoplasm. It catalyses the reaction Endonucleolytic cleavage to 5'-phosphomonoester.. Endonuclease that specifically degrades the RNA of RNA-DNA hybrids. The protein is Ribonuclease HII of Cereibacter sphaeroides (strain ATCC 17029 / ATH 2.4.9) (Rhodobacter sphaeroides).